A 70-amino-acid polypeptide reads, in one-letter code: Small, acid-soluble spore protein 1 (70 aa).

The protein belongs to the alpha/beta-type SASP family.

In terms of biological role, SASP are bound to spore DNA. They are double-stranded DNA-binding proteins that cause DNA to change to an a-like conformation. They protect the DNA backbone from chemical and enzymatic cleavage and are thus involved in dormant spore's high resistance to UV light. The sequence is that of Small, acid-soluble spore protein 1 (sasP-1) from Geobacillus stearothermophilus (Bacillus stearothermophilus).